Here is a 197-residue protein sequence, read N- to C-terminus: HTH-type transcriptional regulator BetI (197 aa).

An HTH tetR-type domain is found at 8–68 (PIRRSQLIHA…ATMRHLLSAL (61 aa)). The segment at residues 31 to 50 (SIALIARLAGVSNGIISHYF) is a DNA-binding region (H-T-H motif).

It participates in amine and polyamine biosynthesis; betaine biosynthesis via choline pathway [regulation]. Repressor involved in the biosynthesis of the osmoprotectant glycine betaine. It represses transcription of the choline transporter BetT and the genes of BetAB involved in the synthesis of glycine betaine. The polypeptide is HTH-type transcriptional regulator BetI (Pseudomonas aeruginosa (strain LESB58)).